The following is a 145-amino-acid chain: Peptidyl-prolyl cis-trans isomerase (145 aa).

In terms of domain architecture, PPIase cyclophilin-type spans 1–145; the sequence is MTQAILETEK…LSVKIVTDAA (145 aa).

The protein belongs to the cyclophilin-type PPIase family.

The catalysed reaction is [protein]-peptidylproline (omega=180) = [protein]-peptidylproline (omega=0). Its function is as follows. PPIases accelerate the folding of proteins. It catalyzes the cis-trans isomerization of proline imidic peptide bonds in oligopeptides. The protein is Peptidyl-prolyl cis-trans isomerase (rot) of Synechococcus elongatus (strain ATCC 33912 / PCC 7942 / FACHB-805) (Anacystis nidulans R2).